The chain runs to 31 residues: Ranatuerin-2Ca (31 aa).

Cysteines 24 and 29 form a disulfide.

As to expression, expressed by the skin glands.

Its subcellular location is the secreted. Antibacterial activity against Gram-positive bacterium S.aureus and Gram-negative bacterium E.coli. Has activity against C.albicans. The protein is Ranatuerin-2Ca of Lithobates clamitans (Green frog).